Reading from the N-terminus, the 395-residue chain is Chaperone protein DnaJ (395 aa).

One can recognise a J domain in the interval 4-69 (DYYEVLGVGR…DKRRRYDQFG (66 aa)). The segment at 152 to 233 (GVEKTLKIKK…CHGEGIKQGE (82 aa)) adopts a CR-type zinc-finger fold. Residues Cys-165, Cys-168, Cys-181, Cys-184, Cys-207, Cys-210, Cys-221, and Cys-224 each coordinate Zn(2+). CXXCXGXG motif repeat units follow at residues 165-172 (CDVCNGTG), 181-188 (CPTCQGTG), 207-214 (CPTCGGEG), and 221-228 (CTACHGEG).

This sequence belongs to the DnaJ family. As to quaternary structure, homodimer. Zn(2+) is required as a cofactor.

Its subcellular location is the cytoplasm. Functionally, participates actively in the response to hyperosmotic and heat shock by preventing the aggregation of stress-denatured proteins and by disaggregating proteins, also in an autonomous, DnaK-independent fashion. Unfolded proteins bind initially to DnaJ; upon interaction with the DnaJ-bound protein, DnaK hydrolyzes its bound ATP, resulting in the formation of a stable complex. GrpE releases ADP from DnaK; ATP binding to DnaK triggers the release of the substrate protein, thus completing the reaction cycle. Several rounds of ATP-dependent interactions between DnaJ, DnaK and GrpE are required for fully efficient folding. Also involved, together with DnaK and GrpE, in the DNA replication of plasmids through activation of initiation proteins. The protein is Chaperone protein DnaJ of Prosthecochloris aestuarii (strain DSM 271 / SK 413).